The chain runs to 121 residues: Large ribosomal subunit protein uL14 (121 aa).

It belongs to the universal ribosomal protein uL14 family. Part of the 50S ribosomal subunit. Forms a cluster with proteins L3 and L19. In the 70S ribosome, L14 and L19 interact and together make contacts with the 16S rRNA in bridges B5 and B8.

Functionally, binds to 23S rRNA. Forms part of two intersubunit bridges in the 70S ribosome. The sequence is that of Large ribosomal subunit protein uL14 from Parabacteroides distasonis (strain ATCC 8503 / DSM 20701 / CIP 104284 / JCM 5825 / NCTC 11152).